A 391-amino-acid polypeptide reads, in one-letter code: Argininosuccinate synthase (391 aa).

6 to 14 lines the ATP pocket; sequence AYSGGLDTT. Position 84 (Tyr-84) interacts with L-citrulline. Gly-114 serves as a coordination point for ATP. Residues Thr-116, Asn-120, and Asp-121 each coordinate L-aspartate. Residue Asn-120 participates in L-citrulline binding. L-citrulline is bound by residues Arg-124, Ser-171, Ser-180, Glu-253, and Tyr-265.

Belongs to the argininosuccinate synthase family. Type 1 subfamily. As to quaternary structure, homotetramer.

The protein resides in the cytoplasm. The catalysed reaction is L-citrulline + L-aspartate + ATP = 2-(N(omega)-L-arginino)succinate + AMP + diphosphate + H(+). Its pathway is amino-acid biosynthesis; L-arginine biosynthesis; L-arginine from L-ornithine and carbamoyl phosphate: step 2/3. The polypeptide is Argininosuccinate synthase (Sulfolobus acidocaldarius (strain ATCC 33909 / DSM 639 / JCM 8929 / NBRC 15157 / NCIMB 11770)).